We begin with the raw amino-acid sequence, 67 residues long: Sec-independent protein translocase protein TatA (67 aa).

The chain crosses the membrane as a helical span at residues 1–21 (MFGIGIQELLVVLVLVLLVFG). The interval 46–67 (PDEIDITPGKKNGKTDKDDKQA) is disordered. The segment covering 58 to 67 (GKTDKDDKQA) has biased composition (basic and acidic residues).

Belongs to the TatA/E family. The Tat system comprises two distinct complexes: a TatABC complex, containing multiple copies of TatA, TatB and TatC subunits, and a separate TatA complex, containing only TatA subunits. Substrates initially bind to the TatABC complex, which probably triggers association of the separate TatA complex to form the active translocon.

Its subcellular location is the cell inner membrane. Part of the twin-arginine translocation (Tat) system that transports large folded proteins containing a characteristic twin-arginine motif in their signal peptide across membranes. TatA could form the protein-conducting channel of the Tat system. The sequence is that of Sec-independent protein translocase protein TatA from Nitratidesulfovibrio vulgaris (strain DSM 19637 / Miyazaki F) (Desulfovibrio vulgaris).